Consider the following 364-residue polypeptide: Putative methylthioribose-1-phosphate isomerase (364 aa).

Substrate-binding positions include 57–59 (RGA), R100, and Q206. Catalysis depends on D247, which acts as the Proton donor. Position 257–258 (257–258 (NK)) interacts with substrate.

It belongs to the eIF-2B alpha/beta/delta subunits family. MtnA subfamily.

It catalyses the reaction 5-(methylsulfanyl)-alpha-D-ribose 1-phosphate = 5-(methylsulfanyl)-D-ribulose 1-phosphate. In terms of biological role, catalyzes the interconversion of methylthioribose-1-phosphate (MTR-1-P) into methylthioribulose-1-phosphate (MTRu-1-P). This Pyrococcus horikoshii (strain ATCC 700860 / DSM 12428 / JCM 9974 / NBRC 100139 / OT-3) protein is Putative methylthioribose-1-phosphate isomerase.